The sequence spans 94 residues: Small ribosomal subunit protein bS20 (94 aa).

This sequence belongs to the bacterial ribosomal protein bS20 family.

Binds directly to 16S ribosomal RNA. In Aquifex aeolicus (strain VF5), this protein is Small ribosomal subunit protein bS20.